The primary structure comprises 416 residues: Glutamyl-tRNA reductase (416 aa).

Residues 49 to 52 (TCNR), Ser-105, 110 to 112 (EPQ), and Gln-116 each bind substrate. Cys-50 serves as the catalytic Nucleophile. 185 to 190 (GAGETI) provides a ligand contact to NADP(+).

The protein belongs to the glutamyl-tRNA reductase family. In terms of assembly, homodimer.

The enzyme catalyses (S)-4-amino-5-oxopentanoate + tRNA(Glu) + NADP(+) = L-glutamyl-tRNA(Glu) + NADPH + H(+). Its pathway is porphyrin-containing compound metabolism; protoporphyrin-IX biosynthesis; 5-aminolevulinate from L-glutamyl-tRNA(Glu): step 1/2. Catalyzes the NADPH-dependent reduction of glutamyl-tRNA(Glu) to glutamate 1-semialdehyde (GSA). The sequence is that of Glutamyl-tRNA reductase from Shewanella baltica (strain OS223).